A 193-amino-acid polypeptide reads, in one-letter code: Potassium-transporting ATPase KdpC subunit (193 aa).

The helical transmembrane segment at 14 to 34 (ITFTFLVLCGLVYPLIVTGIA) threads the bilayer.

The protein belongs to the KdpC family. In terms of assembly, the system is composed of three essential subunits: KdpA, KdpB and KdpC.

The protein localises to the cell membrane. Part of the high-affinity ATP-driven potassium transport (or Kdp) system, which catalyzes the hydrolysis of ATP coupled with the electrogenic transport of potassium into the cytoplasm. This subunit acts as a catalytic chaperone that increases the ATP-binding affinity of the ATP-hydrolyzing subunit KdpB by the formation of a transient KdpB/KdpC/ATP ternary complex. This is Potassium-transporting ATPase KdpC subunit from Bacillus cereus (strain ATCC 14579 / DSM 31 / CCUG 7414 / JCM 2152 / NBRC 15305 / NCIMB 9373 / NCTC 2599 / NRRL B-3711).